The sequence spans 172 residues: MLLPNILLTGTPGVGKTTLGKELASRSGLKYINVGDLAREGQLYDGYDEEYDCPILDEDRVVDELENQMSEGGVIVDYHGCDFFPERWFHIVFVLKTDNSILYKRLENRGYNEKKLKDNIQCEIFQVLHEEALASYKEEIVHQLPSNKPEDLEDNINQILKWIEHWVKDHSS.

ATP contacts are provided by Gly13, Gly15, Lys16, Thr17, and Thr18. The segment at 33 to 56 (NVGDLAREGQLYDGYDEEYDCPIL) is NMPbind. An LID region spans residues 108 to 118 (NRGYNEKKLKD). ATP is bound by residues Arg109 and Lys148.

Belongs to the adenylate kinase family. AK6 subfamily. Monomer and homodimer. Interacts with small ribosomal subunit protein uS11. Not a structural component of 43S pre-ribosomes, but transiently interacts with them by binding to uS11. Interacts with COIL (via C-terminus).

The protein localises to the cytoplasm. Its subcellular location is the nucleus. It localises to the nucleoplasm. The protein resides in the cajal body. The enzyme catalyses AMP + ATP = 2 ADP. It catalyses the reaction ATP + H2O = ADP + phosphate + H(+). Broad-specificity nucleoside monophosphate (NMP) kinase that catalyzes the reversible transfer of the terminal phosphate group between nucleoside triphosphates and monophosphates. Also has ATPase activity. Involved in the late cytoplasmic maturation steps of the 40S ribosomal particles, specifically 18S rRNA maturation. While NMP activity is not required for ribosome maturation, ATPase activity is. Associates transiently with small ribosomal subunit protein uS11. ATP hydrolysis breaks the interaction with uS11. May temporarily remove uS11 from the ribosome to enable a conformational change of the ribosomal RNA that is needed for the final maturation step of the small ribosomal subunit. Its NMP activity may have a role in nuclear energy homeostasis. May be involved in regulation of Cajal body (CB) formation. In Bos taurus (Bovine), this protein is Adenylate kinase isoenzyme 6.